We begin with the raw amino-acid sequence, 309 residues long: Malate dehydrogenase (309 aa).

NAD(+)-binding positions include 9–14 and aspartate 33; that span reads GAGFVG. Positions 82 and 88 each coordinate substrate. NAD(+) is bound by residues asparagine 95 and 118–120; that span reads VNN. The substrate site is built by asparagine 120 and arginine 151. Histidine 175 acts as the Proton acceptor in catalysis.

It belongs to the LDH/MDH superfamily. MDH type 3 family. As to quaternary structure, homotetramer (active enzyme); homodimer and homotrimer at temperatures lower than 55 degrees Celsius (inactive forms).

It catalyses the reaction (S)-malate + NAD(+) = oxaloacetate + NADH + H(+). In terms of biological role, catalyzes the reversible oxidation of malate to oxaloacetate. The protein is Malate dehydrogenase of Chloroflexus aurantiacus (strain ATCC 29366 / DSM 635 / J-10-fl).